A 1230-amino-acid polypeptide reads, in one-letter code: Cullin-associated NEDD8-dissociated protein 1 (1230 aa).

Alanine 2 is modified (N-acetylalanine). 12 HEAT repeats span residues 2-39, 44-81, 83-119, 131-165, 171-208, 210-247, 248-282, 289-366, 370-407, 424-467, 471-510, and 515-552; these read ASAS…KDSI, DSER…KVKE, QVET…ELPP, CKKI…LSRQ, NFHP…SCGN, VFVD…QAGH, RIGE…FESF, EVYP…TRHE, EFYK…QTRP, PLTM…VLPG, QHIP…NHSP, and PHVQ…VIRP. Position 55 is an N6-acetyllysine (lysine 55). The disordered stretch occupies residues 315-344; sequence DEDEDENAMDADGGDDDDQGSDDEYSDDDD. Serine 335 carries the post-translational modification Phosphoserine. Serine 558 is modified (phosphoserine). HEAT repeat units follow at residues 563 to 602, 606 to 643, 646 to 683, 688 to 725, 729 to 768, 770 to 808, 809 to 845, 852 to 889, 890 to 927, 928 to 960, 961 to 998, 1002 to 1039, 1043 to 1097, 1099 to 1133, and 1140 to 1189; these read PYIK…NLGD, SDLP…LKID, PVLG…NYSD, AMID…VYPS, KISG…TGTN, LGYM…ALTR, ACPK…LGEV, SGQL…GNLP, EYLP…GLKP, YVEN…KLTL, IDPE…DHPQ, PLLK…NKPS, DLLD…DSCL, RLDI…LSTL, and QRLD…IPEA. Lysine 971 is modified (N6-acetyllysine).

The protein belongs to the CAND family. In terms of assembly, interacts with TBP. Part of a complex that contains CUL1 and RBX1. Interacts with unneddylated cullins: interacts with CUL1, CUL2, CUL3, CUL4A, CUL4B and CUL5. Does not bind neddylated CUL1. Interaction with cullins is abolished in presence of COMMD1, which antagonizes with CAND1 for interacting with cullins. Interacts with ERCC6. Interacts with DCUN1D1, DCUN1D2, DCUN1D3, DCUN1D4 and DCUN1D5; these interactions are bridged by cullins and strongly inhibits the neddylation of cullins.

It localises to the cytoplasm. The protein resides in the nucleus. Key assembly factor of SCF (SKP1-CUL1-F-box protein) E3 ubiquitin ligase complexes that promotes the exchange of the substrate-recognition F-box subunit in SCF complexes, thereby playing a key role in the cellular repertoire of SCF complexes. Acts as a F-box protein exchange factor. The exchange activity of CAND1 is coupled with cycles of neddylation conjugation: in the deneddylated state, cullin-binding CAND1 binds CUL1-RBX1, increasing dissociation of the SCF complex and promoting exchange of the F-box protein. Probably plays a similar role in other cullin-RING E3 ubiquitin ligase complexes. This is Cullin-associated NEDD8-dissociated protein 1 (CAND1) from Bos taurus (Bovine).